The following is a 444-amino-acid chain: Glutamyl-tRNA reductase (444 aa).

Substrate is bound by residues 49–52 (TCNR), S109, 114–116 (ETQ), and Q120. C50 (nucleophile) is an active-site residue. NADP(+) is bound at residue 189 to 194 (GAGKMG).

Belongs to the glutamyl-tRNA reductase family. In terms of assembly, homodimer.

It catalyses the reaction (S)-4-amino-5-oxopentanoate + tRNA(Glu) + NADP(+) = L-glutamyl-tRNA(Glu) + NADPH + H(+). It functions in the pathway porphyrin-containing compound metabolism; protoporphyrin-IX biosynthesis; 5-aminolevulinate from L-glutamyl-tRNA(Glu): step 1/2. Its function is as follows. Catalyzes the NADPH-dependent reduction of glutamyl-tRNA(Glu) to glutamate 1-semialdehyde (GSA). The sequence is that of Glutamyl-tRNA reductase from Bacillus cereus (strain ZK / E33L).